A 549-amino-acid polypeptide reads, in one-letter code: Arginine-containing cyclodipeptide synthase amaA (549 aa).

Residues 445–449 (DDRAE) carry the Conserved DDXXE motif motif.

Belongs to the arginine-containing cyclodipeptide synthase family.

The enzyme catalyses L-prolyl-tRNA(Pro) + L-arginyl-tRNA(Arg) = cyclo(L-arginyl-L-prolyl) + tRNA(Pro) + tRNA(Arg) + 2 H(+). Its pathway is secondary metabolite biosynthesis. In terms of biological role, arginine-containing cyclodipeptide synthase; part of the cluster that mediates the biosynthesis of a highly modified cyclo-arginine-proline dipeptide (cRP). Within the pathway, amaA acts as the scaffold-generating enzyme and is responsible for formation of the cyclo-Arg-Pro diketopiperazine (cRW) from L-arginyl-tRNA(Arg) + L-prolyl-tRNA(Pro). Additional enzymes from the cluster then further modify the cyclo-Arg-Pro diketopiperazine (cRW) scaffold. The protein is Arginine-containing cyclodipeptide synthase amaA of Apiospora montagnei (Sphaeria apiospora).